The sequence spans 1545 residues: ATP-binding cassette sub-family C member 9 (1545 aa).

Over 1–30 (MSLSFCGNNISSYNIYHGVLQNPCFVDALN) the chain is Extracellular. Residue Asn-9 is glycosylated (N-linked (GlcNAc...) asparagine). Residues 31 to 51 (LVPHVFLLFITFPILFIGWGS) form a helical membrane-spanning segment. The Cytoplasmic portion of the chain corresponds to 52-72 (QSSKVQIHHNTWLHFPGHNLR). The helical transmembrane segment at 73-93 (WILTFALLFVHVCEIAEGIVS) threads the bilayer. The Extracellular segment spans residues 94-101 (DSQRASRH). The helical transmembrane segment at 102–122 (LHLFMPAVMGFVATTTSIVYY) threads the bilayer. Residues 123-132 (HNIETSNFPK) lie on the Cytoplasmic side of the membrane. A helical transmembrane segment spans residues 133–153 (LLLALFLYWVMAFITKTIKLV). The Extracellular segment spans residues 154–167 (KYWQLGWGMSDLRF). Residues 168-188 (CITGVMVILNGLLMAVEINVI) traverse the membrane as a helical segment. Over 189–301 (RVRRYVFFMN…AFGRPILLSS (113 aa)) the chain is Cytoplasmic. The region spanning 297-594 (ILLSSTFRYL…LSTVVRFAVK (298 aa)) is the ABC transmembrane type-1 1 domain. The helical transmembrane segment at 302-322 (TFRYLADLLGFAGPLCISGIV) threads the bilayer. The Extracellular segment spans residues 323 to 347 (QRVNEPKNNTTRFSETLSSKEFLEN). Residues Asn-330 and Asn-331 are each glycosylated (N-linked (GlcNAc...) asparagine). A helical membrane pass occupies residues 348-368 (AHVLAVLLFLALILQRTFLQA). The Cytoplasmic segment spans residues 369–420 (SYYVTIETGINLRGALLAMIYNKILRLSTSNLSMGEMTLGQINNLVAIETNQ). A helical membrane pass occupies residues 421-441 (LMWFLFLCPNLWAMPVQIIMG). The Extracellular portion of the chain corresponds to 442-452 (VILLYNLLGSS). A helical transmembrane segment spans residues 453-473 (ALVGAAVIVLLAPIQYFIATK). The Cytoplasmic segment spans residues 474–528 (LAEAQKSTLDYSTERLKKTNEILKGIKLLKLYAWEHIFCKSVEETRMKELSSLKT). A helical membrane pass occupies residues 529–549 (FALYTSLSIFMNAAIPIAAVL). Residues 550–568 (ATFVTHAYASGNNLKPAEA) lie on the Extracellular side of the membrane. A helical transmembrane segment spans residues 569–589 (FASLSLFHILVTPLFLLSTVV). Topologically, residues 590 to 986 (RFAVKAIISV…TCWWYLTSGG (397 aa)) are cytoplasmic. The region spanning 668 to 908 (IKVTNGYFSW…DVELYEHWKT (241 aa)) is the ABC transporter 1 domain. 701 to 708 (GQVGCGKS) is a binding site for ATP. The tract at residues 940 to 963 (REAKAQMEDEDEEEEEEEDEDDNM) is disordered. Residues 947–962 (EDEDEEEEEEEDEDDN) show a composition bias toward acidic residues. Residues 987–1007 (FFLLFLMIFSKLLKHSVIVAI) traverse the membrane as a helical segment. The region spanning 990–1270 (LFLMIFSKLL…VVRNLADLEV (281 aa)) is the ABC transmembrane type-1 2 domain. The Extracellular portion of the chain corresponds to 1008–1030 (DYWLATWTSEYSINDPGKADQTF). The helical transmembrane segment at 1031 to 1051 (YVAGFSILCGAGIFLCLVTSL) threads the bilayer. The Cytoplasmic portion of the chain corresponds to 1052 to 1123 (TVEWMGLTAA…TLLCLSAIGM (72 aa)). A helical transmembrane segment spans residues 1124 to 1144 (ISYATPVFLIALAPLGVAFYF). Residues 1145–1241 (IQKYFRVASK…IASISGSSNS (97 aa)) lie on the Extracellular side of the membrane. A helical membrane pass occupies residues 1242–1262 (GLVGLGLLYALTITNYLNWVV). The Cytoplasmic segment spans residues 1263–1545 (RNLADLEVQM…LFSTLVMTNK (283 aa)). Positions 1308 to 1542 (IKIHDLCVRY…KNGLFSTLVM (235 aa)) constitute an ABC transporter 2 domain. Position 1342–1349 (1342–1349 (GRTGSGKS)) interacts with ATP.

Belongs to the ABC transporter superfamily. ABCC family. Conjugate transporter (TC 3.A.1.208) subfamily. Interacts with KCNJ11. Interacts with KCNJ8. Expressed at high levels in heart, skeletal muscle and ovary. Moderate levels are found in brain, tongue and pancreatic islets. Low levels are found in lung, testis and adrenal gland. Expressed at very low levels in stomach, colon, thyroid and pituitary.

Its subcellular location is the membrane. Its function is as follows. Subunit of ATP-sensitive potassium channels (KATP). Can form cardiac and smooth muscle-type KATP channels with KCNJ11. KCNJ11 forms the channel pore while ABCC9 is required for activation and regulation. Can form a sulfonylurea-sensitive but ATP-insensitive potassium channel with KCNJ8. The protein is ATP-binding cassette sub-family C member 9 (Abcc9) of Rattus norvegicus (Rat).